The chain runs to 405 residues: Bifunctional enzyme IspD/IspF (405 aa).

Residues methionine 1–valine 246 are 2-C-methyl-D-erythritol 4-phosphate cytidylyltransferase. The tract at residues arginine 247–threonine 405 is 2-C-methyl-D-erythritol 2,4-cyclodiphosphate synthase. 2 residues coordinate a divalent metal cation: aspartate 253 and histidine 255. 4-CDP-2-C-methyl-D-erythritol 2-phosphate-binding positions include aspartate 253–histidine 255 and histidine 279–serine 280. Histidine 287 lines the a divalent metal cation pocket. 4-CDP-2-C-methyl-D-erythritol 2-phosphate contacts are provided by residues aspartate 301–glycine 303, threonine 377–glutamate 380, phenylalanine 384, and arginine 387.

This sequence in the N-terminal section; belongs to the IspD/TarI cytidylyltransferase family. IspD subfamily. In the C-terminal section; belongs to the IspF family. The cofactor is a divalent metal cation.

The catalysed reaction is 2-C-methyl-D-erythritol 4-phosphate + CTP + H(+) = 4-CDP-2-C-methyl-D-erythritol + diphosphate. It carries out the reaction 4-CDP-2-C-methyl-D-erythritol 2-phosphate = 2-C-methyl-D-erythritol 2,4-cyclic diphosphate + CMP. It participates in isoprenoid biosynthesis; isopentenyl diphosphate biosynthesis via DXP pathway; isopentenyl diphosphate from 1-deoxy-D-xylulose 5-phosphate: step 2/6. The protein operates within isoprenoid biosynthesis; isopentenyl diphosphate biosynthesis via DXP pathway; isopentenyl diphosphate from 1-deoxy-D-xylulose 5-phosphate: step 4/6. Bifunctional enzyme that catalyzes the formation of 4-diphosphocytidyl-2-C-methyl-D-erythritol from CTP and 2-C-methyl-D-erythritol 4-phosphate (MEP) (IspD), and catalyzes the conversion of 4-diphosphocytidyl-2-C-methyl-D-erythritol 2-phosphate (CDP-ME2P) to 2-C-methyl-D-erythritol 2,4-cyclodiphosphate (ME-CPP) with a corresponding release of cytidine 5-monophosphate (CMP) (IspF). This is Bifunctional enzyme IspD/IspF from Rhizobium etli (strain CIAT 652).